Here is a 133-residue protein sequence, read N- to C-terminus: Ribosome-binding factor A (133 aa).

The protein belongs to the RbfA family. Monomer. Binds 30S ribosomal subunits, but not 50S ribosomal subunits or 70S ribosomes.

The protein localises to the cytoplasm. One of several proteins that assist in the late maturation steps of the functional core of the 30S ribosomal subunit. Associates with free 30S ribosomal subunits (but not with 30S subunits that are part of 70S ribosomes or polysomes). Required for efficient processing of 16S rRNA. May interact with the 5'-terminal helix region of 16S rRNA. The chain is Ribosome-binding factor A from Acinetobacter baumannii (strain AB307-0294).